A 430-amino-acid polypeptide reads, in one-letter code: Adenylosuccinate synthetase (430 aa).

GTP-binding positions include 12–18 (GDEGKGK) and 40–42 (GHT). The active-site Proton acceptor is the aspartate 13. Residues aspartate 13 and glycine 40 each contribute to the Mg(2+) site. Residues 13-16 (DEGK), 38-41 (NAGH), threonine 128, arginine 142, glutamine 223, threonine 238, and arginine 302 each bind IMP. The active-site Proton donor is the histidine 41. 298-304 (TTTGRPR) lines the substrate pocket. Residues arginine 304, 330–332 (SID), and 412–414 (SVG) each bind GTP.

Belongs to the adenylosuccinate synthetase family. As to quaternary structure, homodimer. Requires Mg(2+) as cofactor.

Its subcellular location is the cytoplasm. The catalysed reaction is IMP + L-aspartate + GTP = N(6)-(1,2-dicarboxyethyl)-AMP + GDP + phosphate + 2 H(+). Its pathway is purine metabolism; AMP biosynthesis via de novo pathway; AMP from IMP: step 1/2. In terms of biological role, plays an important role in the de novo pathway of purine nucleotide biosynthesis. Catalyzes the first committed step in the biosynthesis of AMP from IMP. The protein is Adenylosuccinate synthetase of Bacillus licheniformis (strain ATCC 14580 / DSM 13 / JCM 2505 / CCUG 7422 / NBRC 12200 / NCIMB 9375 / NCTC 10341 / NRRL NRS-1264 / Gibson 46).